A 166-amino-acid chain; its full sequence is 3-isopropylmalate dehydratase small subunit (166 aa).

The protein belongs to the LeuD family. LeuD type 2 subfamily. As to quaternary structure, heterodimer of LeuC and LeuD.

It carries out the reaction (2R,3S)-3-isopropylmalate = (2S)-2-isopropylmalate. The protein operates within amino-acid biosynthesis; L-leucine biosynthesis; L-leucine from 3-methyl-2-oxobutanoate: step 2/4. Functionally, catalyzes the isomerization between 2-isopropylmalate and 3-isopropylmalate, via the formation of 2-isopropylmaleate. The sequence is that of 3-isopropylmalate dehydratase small subunit from Caldicellulosiruptor bescii (strain ATCC BAA-1888 / DSM 6725 / KCTC 15123 / Z-1320) (Anaerocellum thermophilum).